Here is a 116-residue protein sequence, read N- to C-terminus: Large ribosomal subunit protein bL17 (116 aa).

This sequence belongs to the bacterial ribosomal protein bL17 family. Part of the 50S ribosomal subunit. Contacts protein L32.

This is Large ribosomal subunit protein bL17 from Synechococcus sp. (strain CC9902).